The primary structure comprises 550 residues: Luciferin 4-monooxygenase (550 aa).

A Microbody targeting signal motif is present at residues 548–550; sequence SKL.

The protein belongs to the ATP-dependent AMP-binding enzyme family. It depends on Mg(2+) as a cofactor.

The protein resides in the peroxisome. The enzyme catalyses firefly D-luciferin + ATP + O2 = firefly oxyluciferin + hnu + AMP + CO2 + diphosphate. In terms of biological role, produces green light with a wavelength of 562 nm. This chain is Luciferin 4-monooxygenase, found in Photinus pyralis (Common eastern firefly).